The following is a 132-amino-acid chain: Ubiquinol-cytochrome c reductase complex assembly factor 4 (132 aa).

A signal peptide spans 1-15; sequence MNRVLCAPAAGAVRA. Over 16 to 78 the chain is Mitochondrial matrix; sequence LRLIGWASRS…GKGHQRPWWK (63 aa). The interval 29–72 is disordered; it reads LPGSRDRAHPAAEEEDDPDRPIEFSSSKANPHRWSVGHTMGKGH. A helical transmembrane segment spans residues 79 to 95; the sequence is VLPLSCFLVALIIWCYL. Residues 96–132 are Mitochondrial intermembrane-facing; it reads REESEADQWLRQVWGEVPEPSDRSEEPETPAAYRART. Residues 110-132 are disordered; it reads GEVPEPSDRSEEPETPAAYRART.

Belongs to the UQCC4 family. As to quaternary structure, forms a complex, named COMB/coordinator of mitochondrial CYTB biogenesis, composed of UQCC1, UQCC2, UQCC4, UQCC5 and UQCC6; stabilizes nascent cytochrome b/MT-CYB and promotes its membrane insertion. Forms a complex, named COMA, composed of UQCC1, UQCC2 and UQCC4; activates MT-CYB translation. Forms a complex, named COMC, composed of UQCC1, UQCC2; UQCC3 and UQCC4; mediates MT-CYB hemylation and association with the first nuclear-encoded complex III subunit UQCRQ. Complexes COMA and COMB are bound to the mitochondrion inner membrane by UQCC4.

Its subcellular location is the mitochondrion inner membrane. Functionally, required for the assembly and stability of the mitochondrial ubiquinol-cytochrome c reductase complex (complex III (CIII) or cytochrome b-c1 complex), a multisubunit transmembrane complex that is part of the mitochondrial electron transport chain (ETC) which drives oxidative phosphorylation. In Homo sapiens (Human), this protein is Ubiquinol-cytochrome c reductase complex assembly factor 4.